A 123-amino-acid polypeptide reads, in one-letter code: Large ribosomal subunit protein bL19 (123 aa).

It belongs to the bacterial ribosomal protein bL19 family.

Functionally, this protein is located at the 30S-50S ribosomal subunit interface and may play a role in the structure and function of the aminoacyl-tRNA binding site. This is Large ribosomal subunit protein bL19 from Laribacter hongkongensis (strain HLHK9).